Reading from the N-terminus, the 265-residue chain is Putative hydro-lyase PST_2764 (265 aa).

Belongs to the D-glutamate cyclase family.

In Stutzerimonas stutzeri (strain A1501) (Pseudomonas stutzeri), this protein is Putative hydro-lyase PST_2764.